The primary structure comprises 465 residues: MKEPDAIKLFVGQIPRHLEEKDLKPIFEQFGRIFELTVIKDKYTGLHKGCAFLTYCARDSALKAQSALHEQKTLPGMNRPIQVKPADSESRGDRKLFVGMLGKQQTDEDVRKMFEPFGTIDECTVLRGPDGTSKGCAFVKFQTHAEAQAAINTLHSSRTLPGASSSLVVKFADTEKERGLRRMQQVATQLGMFSPIALQFGAYSAYTQALMQQQAALVAAHSAYLSPMATMAAVQMQHMAAISANGLIATPITPSSGTSTPPAIAATPVSAIPAALGVNGYSPVPTQPTGQPAPDALYPNGVHPYPAQSPAAPVDPLQQAYAGMQHYTAAYPAAYSLVAPAFPQPPALVAQQPPPPPQQQQQQQQQQQQQQQQREGPDGCNIFIYHLPQEFTDSEILQMFVPFGHVISAKVFVDRATNQSKCFGFVSFDNPASAQAAIQAMNGFQIGMKRLKVQLKRPKDANRPY.

RRM domains lie at 7–88 and 95–174; these read IKLF…PADS and KLFV…FADT. Disordered stretches follow at residues 283-311 and 345-379; these read PVPT…QSPA and PPAL…GPDG. Residues 345 to 358 are compositionally biased toward pro residues; the sequence is PPALVAQQPPPPPQ. Positions 359 to 373 are enriched in low complexity; sequence QQQQQQQQQQQQQQQ. In terms of domain architecture, RRM 3 spans 380–458; sequence CNIFIYHLPQ…KRLKVQLKRP (79 aa).

This sequence belongs to the CELF/BRUNOL family.

It localises to the nucleus. The protein localises to the cytoplasm. Its function is as follows. RNA-binding protein involved in the regulation of pre-mRNA alternative splicing. Mediates exon inclusion and/or exclusion in pre-mRNA that are subject to tissue-specific and developmentally regulated alternative splicing. Specifically activates exon 5 inclusion of cardiac isoforms of TNNT2 during heart remodeling at the juvenile to adult transition. Activates the splicing of MAPT/Tau exon 10. Binds to muscle-specific splicing enhancer (MSE) intronic sites flanking the alternative exon 5 of TNNT2 pre-mRNA. This is CUGBP Elav-like family member 3 (Celf3) from Mus musculus (Mouse).